Here is a 134-residue protein sequence, read N- to C-terminus: Mite allergen Blo t 5 (134 aa).

An N-terminal signal peptide occupies residues 1 to 17; the sequence is MKFAIVLIACFAASVLA. A coiled-coil region spans residues 18–113; the sequence is QEHKPKKDDF…RFNYEEAQTL (96 aa).

The protein belongs to the mite group 5 allergen family. As to quaternary structure, may exist as homodimer and homotrimer. As to expression, midgut and hindgut contents as well as fecal pellets (at protein level).

The protein is Mite allergen Blo t 5 (BLOT5) of Blomia tropicalis (Mite).